The primary structure comprises 154 residues: Large ribosomal subunit protein uL13 (154 aa).

The segment at 132-154 (PHEAQQPETLDVGAMNRKNKRAA) is disordered.

The protein belongs to the universal ribosomal protein uL13 family. Part of the 50S ribosomal subunit.

Functionally, this protein is one of the early assembly proteins of the 50S ribosomal subunit, although it is not seen to bind rRNA by itself. It is important during the early stages of 50S assembly. The protein is Large ribosomal subunit protein uL13 of Rhodopseudomonas palustris (strain HaA2).